The chain runs to 150 residues: Ribonuclease K6 (150 aa).

The signal sequence occupies residues 1-23 (MVLCFPLLLLLLVLWGPVCLLHA). H38 functions as the Proton acceptor in the catalytic mechanism. Intrachain disulfides connect C46-C104, C60-C114, C78-C129, and C85-C92. N55 carries N-linked (GlcNAc...) asparagine glycosylation. Residues 61–65 (KHQNT) and K86 contribute to the substrate site. The N-linked (GlcNAc...) asparagine glycan is linked to N100. R105 lines the substrate pocket. The Proton donor role is filled by H145.

Belongs to the pancreatic ribonuclease family. Interacts (via N-terminus) with bacterial lipopolysaccharide (LPS).

It is found in the secreted. It localises to the lysosome. The protein localises to the cytoplasmic granule. Functionally, ribonuclease which shows a preference for the pyrimidines uridine and cytosine. Has potent antibacterial activity against a range of Gram-positive and Gram-negative bacteria, including P.aeruginosa, A.baumanii, M.luteus, S.aureus, E.faecalis, E.faecium, S.saprophyticus and E.coli. Causes loss of bacterial membrane integrity, and also promotes agglutination of Gram-negative bacteria. Probably contributes to urinary tract sterility. Bactericidal activity is independent of RNase activity. This chain is Ribonuclease K6 (RNASE6), found in Chlorocebus aethiops (Green monkey).